A 297-amino-acid chain; its full sequence is tRNA pseudouridine synthase B (297 aa).

Aspartate 44 serves as the catalytic Nucleophile.

The protein belongs to the pseudouridine synthase TruB family. Type 1 subfamily.

The enzyme catalyses uridine(55) in tRNA = pseudouridine(55) in tRNA. In terms of biological role, responsible for synthesis of pseudouridine from uracil-55 in the psi GC loop of transfer RNAs. This Corynebacterium glutamicum (strain ATCC 13032 / DSM 20300 / JCM 1318 / BCRC 11384 / CCUG 27702 / LMG 3730 / NBRC 12168 / NCIMB 10025 / NRRL B-2784 / 534) protein is tRNA pseudouridine synthase B.